A 165-amino-acid polypeptide reads, in one-letter code: GTP-dependent dephospho-CoA kinase (165 aa).

GTP is bound by residues Asp44, Val45, Asp63, Lys65, Glu115, and Asp138.

Belongs to the GTP-dependent DPCK family.

The catalysed reaction is 3'-dephospho-CoA + GTP = GDP + CoA + H(+). It participates in cofactor biosynthesis; coenzyme A biosynthesis. Its function is as follows. Catalyzes the GTP-dependent phosphorylation of the 3'-hydroxyl group of dephosphocoenzyme A to form coenzyme A (CoA). The chain is GTP-dependent dephospho-CoA kinase from Picrophilus torridus (strain ATCC 700027 / DSM 9790 / JCM 10055 / NBRC 100828 / KAW 2/3).